The sequence spans 62 residues: Pro-MCH variant (62 aa).

Residues 23–41 are NGE-like; that stretch reads GSVAFPAENGVQDTESTQE. A disordered region spans residues 29–62; sequence AENGVQDTESTQEKRETGDEENSAKFPIGRRDFD. The segment at 44 to 56 is NEI-like; it reads ETGDEENSAKFPI. Positions 60-62 are melanin-concentrating hormone-like; the sequence is DFD.

Belongs to the melanin-concentrating hormone family.

The sequence is that of Pro-MCH variant (PMCHL1) from Pan paniscus (Pygmy chimpanzee).